The sequence spans 337 residues: LIX1-like protein (337 aa).

Residues 1-55 are disordered; it reads METMRAQRLQPGVGVGGRGTLRALRPGVTGAPTSAATPPVGPPPAPPPPAPPLPP. Positions 26-38 are enriched in low complexity; that stretch reads PGVTGAPTSAATP. Over residues 39 to 55 the composition is skewed to pro residues; that stretch reads PVGPPPAPPPPAPPLPP.

It belongs to the LIX1 family.

The chain is LIX1-like protein (Lix1l) from Mus musculus (Mouse).